Consider the following 451-residue polypeptide: MLRLCFLLSFMCLVKSDTDETCPSFTRLSFHSAVVGTGLSVRLMLYTQRDQTCAQVINSTALGSLNVTKKTTFIIHGFRPTGSPPVWMEELVQSLISVQEMNVVVVDWNRGATTVIYPHASSKTRKVALILKEFIDQMLAKGASLDNIYMIGVSLGAHIAGFVGEMYSGKLGRITGLDPAGPLFNGRPPEDRLDPSDAQFVDVIHSDTDALGYREALGHIDFYPNGGLDQPGCPKTIFGGIKYFKCDHQMSVFLYLASLQNNCSITAYPCDSYRDYRNGKCVSCGAGHIVSCPSLGYYADNWREYLWDRDPPMTKAFFDTAETKPYCIYHYFVDIISWNKSVRRGFITIKLRGEDGNITESKIDHEPSAFQKYHQVSLLARFNRDLDKVAEISLLFSTKSVVGPKYKLRVLRMKLRSLAHPDRPHLCRYDLVLMENVETFFQPILCSKQQM.

Residues M1–S16 form the signal peptide. A glycan (N-linked (GlcNAc...) asparagine) is linked at N66. Residue S154 is the Nucleophile of the active site. Residue D178 is the Charge relay system of the active site. The cysteines at positions 233 and 246 are disulfide-linked. The active-site Charge relay system is H248. Intrachain disulfides connect C270–C281, C284–C292, and C427–C446.

Belongs to the AB hydrolase superfamily. Lipase family. Interacts with TTMP/C3orf52.

It localises to the secreted. The protein localises to the cell membrane. The catalysed reaction is 1-hexadecanoyl-2-(9Z-octadecenoyl)-sn-glycero-3-phosphate + H2O = 2-(9Z-octadecenoyl)-sn-glycero-3-phosphate + hexadecanoate + H(+). Functionally, hydrolyzes specifically phosphatidic acid (PA) to produce 2-acyl lysophosphatidic acid (LPA; a potent bioactive lipid mediator) and fatty acid. Does not hydrolyze other phospholipids, like phosphatidylserine (PS), phosphatidylcholine (PC) and phosphatidylethanolamine (PE) or triacylglycerol (TG). The polypeptide is Lipase member H (Liph) (Rattus norvegicus (Rat)).